A 330-amino-acid polypeptide reads, in one-letter code: Ribosomal RNA small subunit methyltransferase A (330 aa).

5 residues coordinate S-adenosyl-L-methionine: H29, L31, G56, E77, and D98. Residues 115-158 (PVRSAGLPQAETAPKGLEPAGSSSQQGPRDWLRQTAGAAAPSRG) form a disordered region. Residue N177 coordinates S-adenosyl-L-methionine.

The protein belongs to the class I-like SAM-binding methyltransferase superfamily. rRNA adenine N(6)-methyltransferase family. RsmA subfamily.

It is found in the cytoplasm. The catalysed reaction is adenosine(1518)/adenosine(1519) in 16S rRNA + 4 S-adenosyl-L-methionine = N(6)-dimethyladenosine(1518)/N(6)-dimethyladenosine(1519) in 16S rRNA + 4 S-adenosyl-L-homocysteine + 4 H(+). In terms of biological role, specifically dimethylates two adjacent adenosines (A1518 and A1519) in the loop of a conserved hairpin near the 3'-end of 16S rRNA in the 30S particle. May play a critical role in biogenesis of 30S subunits. The protein is Ribosomal RNA small subunit methyltransferase A of Polaromonas sp. (strain JS666 / ATCC BAA-500).